The sequence spans 699 residues: Polyribonucleotide nucleotidyltransferase (699 aa).

The Mg(2+) site is built by aspartate 487 and aspartate 493. One can recognise a KH domain in the interval 554–613 (PRMLNMKINPEKIRDVIGKGGAVIRALQEETGTVIEIEDDGSITISSVSAEGAQKAKARI). The S1 motif domain occupies 623 to 691 (GKVYEGTVVR…ERGKIRLSMK (69 aa)).

It belongs to the polyribonucleotide nucleotidyltransferase family. Mg(2+) serves as cofactor.

It localises to the cytoplasm. It carries out the reaction RNA(n+1) + phosphate = RNA(n) + a ribonucleoside 5'-diphosphate. Its function is as follows. Involved in mRNA degradation. Catalyzes the phosphorolysis of single-stranded polyribonucleotides processively in the 3'- to 5'-direction. The polypeptide is Polyribonucleotide nucleotidyltransferase (Azoarcus sp. (strain BH72)).